The primary structure comprises 184 residues: Signal peptidase complex subunit 3 (184 aa).

At 1-14 the chain is on the cytoplasmic side; it reads MFSFVQRFQNVSNQ. The helical; Signal-anchor for type II membrane protein transmembrane segment at 15 to 35 threads the bilayer; sequence AFSMGIVMVVFIMASSYYQLI. The Lumenal portion of the chain corresponds to 36–184; sequence NNNAFSVPSN…TLTVENKNKV (149 aa). Asparagine 102 and asparagine 173 each carry an N-linked (GlcNAc...) asparagine glycan.

This sequence belongs to the SPCS3 family. As to quaternary structure, component of the signal peptidase complex (SPC) composed of a catalytic subunit SEC11 and three accessory subunits SPC1, SPC2 and SPC3. The complex induces a local thinning of the ER membrane which is used to measure the length of the signal peptide (SP) h-region of protein substrates. This ensures the selectivity of the complex towards h-regions shorter than 18-20 amino acids. Interacts with SEC11. SPC associates with the translocon complex.

It localises to the endoplasmic reticulum membrane. In terms of biological role, essential component of the signal peptidase complex (SPC) which catalyzes the cleavage of N-terminal signal sequences from nascent proteins as they are translocated into the lumen of the endoplasmic reticulum. Essential for the SPC catalytic activity, possibly by stabilizing and positioning the active center of the complex close to the lumenal surface. Essential for viability. This Saccharomyces cerevisiae (strain ATCC 204508 / S288c) (Baker's yeast) protein is Signal peptidase complex subunit 3 (SPC3).